The sequence spans 630 residues: A-type voltage-gated potassium channel KCND2 (630 aa).

Over 1 to 184 the chain is Cytoplasmic; that stretch reads MAAGVAAWLP…FENPHTSTMA (184 aa). Residues 2–20 are interaction with KCNIP1, KCNIP2, and other family members; that stretch reads AAGVAAWLPFARAAAIGWM. Position 38 is a phosphothreonine (Thr38). Residues 71–90 form an interaction with KCNIP1 region; the sequence is ERDFFYHPETQQYFFDRDPD. The Zn(2+) site is built by His105, Cys111, Cys132, and Cys133. Residues 185–206 traverse the membrane as a helical segment; the sequence is LVFYYVTGFFIAVSVIANVVET. The Extracellular portion of the chain corresponds to 207–226; it reads VPCGSSPGHIKELPCGERYA. The chain crosses the membrane as a helical span at residues 227 to 249; sequence VAFFCLDTACVMIFTVEYLLRLA. The Cytoplasmic segment spans residues 250–256; that stretch reads AAPSRYR. Residues 257–281 form a helical membrane-spanning segment; that stretch reads FVRSVMSIIDVVAILPYYIGLVMTD. The Extracellular segment spans residues 282–287; that stretch reads NEDVSG. A helical; Voltage-sensor transmembrane segment spans residues 288–307; it reads AFVTLRVFRVFRIFKFSRHS. The Cytoplasmic portion of the chain corresponds to 308–321; that stretch reads QGLRILGYTLKSCA. The segment at 308–321 is S4-S5 linker; the sequence is QGLRILGYTLKSCA. The helical transmembrane segment at 322-345 threads the bilayer; the sequence is SELGFLLFSLTMAIIIFATVMFYA. Residues 346–357 lie on the Extracellular side of the membrane; it reads EKGSSASKFTSI. The segment at residues 358 to 369 is an intramembrane region (helical); sequence PAAFWYTIVTMT. Residues Thr370, Leu371, Gly372, and Tyr373 each coordinate K(+). The Selectivity filter motif lies at 370 to 375; sequence TLGYGD. The stretch at 370–377 is an intramembrane region; sequence TLGYGDMV. Residues 378–380 are Extracellular-facing; sequence PKT. Residues 381–403 form a helical membrane-spanning segment; sequence IAGKIFGSICSLSGVLVIALPVP. At 404–630 the chain is on the cytoplasmic side; sequence VIVSNFSRIY…GGNIVRVSAL (227 aa). Residue Ser438 is modified to Phosphoserine. The interval 474-489 is required for dendritic targeting; the sequence is FETQHHHLLHCLEKTT. Residues 474 to 630 are important for normal channel activation and inactivation, for interaction with KCNIP2, and probably other family members as well; sequence FETQHHHLLH…GGNIVRVSAL (157 aa). Ser548, Ser552, Ser572, and Ser575 each carry phosphoserine. The segment at 600-623 is disordered; it reads IPTPPVTTPEGDDRPESPEYSGGN. A phosphothreonine mark is found at Thr602 and Thr607. The residue at position 616 (Ser616) is a Phosphoserine. The short motif at 627-630 is the PDZ-binding element; that stretch reads VSAL.

It belongs to the potassium channel family. D (Shal) (TC 1.A.1.2) subfamily. Kv4.2/KCND2 sub-subfamily. As to quaternary structure, homotetramer or heterotetramer with KCND1 or KCND3. Associates with the regulatory subunits KCNIP2, KCNIP3 and KCNIP4. Interacts with the regulatory subunit KCNIP1; this interaction mediates the capture of both the N- and C-terminus of KCND2, preventing N-type inactivation and stabilizing the S6 conformation, thereby accelerating closed state inactivation and recovery. Interacts with DPP10, DLG4 and DLG1. In vivo, probably exists as heteromeric complex containing variable proportions of KCND1, KCND2, KCND3, KCNIP1, KCNIP2, KCNIP3, KCNIP4, DPP6 and DPP10. The tetrameric channel can associate with up to four regulatory subunits, such as KCNIP2 or KCNIP4. Interaction with KCNIP3 promotes tetramerization and formation of a functional potassium channel. Interaction with four KCNIP4 chains does not reduce interaction with DPP10. Probably part of a complex consisting of KCNIP1, KCNIP2 isoform 3 and KCND2. Interacts with FLNA and FLNC. Interacts with NCS1/FREQ. Identified in a complex with cAMP-dependent protein kinase (PKA), CAV3, AKAP6 and KCND3 in cardiac myocytes. Interacts (via S1 and S2 helices) with DPP6; this interaction stabilizes the conformation of the S1-S2 helices and facilitates S4 conformational change, including S4 sliding up and down, thereby accelerating activation, inactivation, and recovery. Post-translationally, phosphorylation at Ser-438 in response to MAPK activation is increased in stimulated dendrites. Interaction with KCNIP2 and DPP6 propomtes phosphorylation by PKA at Ser-552. Phosphorylation at Ser-552 has no effect on interaction with KCNIP3, but is required for the regulation of channel activity by KCNIP3. Phosphorylation at Ser-552 leads to KCND2 internalization. Phosphorylated by MAPK in response to signaling via the metabotropic glutamate receptor GRM5. Phosphorylation at Ser-616 is required for the down-regulation of neuronal A-type currents in response to signaling via GRM5. In terms of tissue distribution, detected in brain cortex, hippocampus, dentate gyrus, thalamus and cerebellum. Detected in neurons from the primary visual cortex. Detected in the supraoptic nucleus in hypothalamus, in hippocampus and the habenular nucleus of the thalamus. Detected in the bed nucleus of the stria terminalis. Detected in dendritic fields in the hippocampus CA1 layer, in stratum radiatum, stratum oriens, stratum lacunosum-moleculare and stratum pyramidale. Detected in dendritic fields in the hippocampus CA3 layer and in dentate gyrus. Detected in the cerebellum granule cell layer, where it localizes at synapses. Detected in the main olfactory bulb, especially in the granule cell layer and the external plexiform layer, but also the mitral layer. Detected in heart atrium and ventricle. Detected in heart left ventricle (at protein level). Highly expressed in heart and throughout the brain, with similar levels in cortex and hypothalamus, and much higher levels in hippocampus, dentate gyrus and the habenular nucleus of the thalamus. Detected in brain, and at lower levels in heart atrium and ventricle. Detected in neurons from the bed nucleus of the stria terminalis. Detected in aorta, cardiac and smooth muscle.

It localises to the cell membrane. Its subcellular location is the cell projection. It is found in the dendrite. The protein localises to the synapse. The protein resides in the perikaryon. It localises to the postsynaptic cell membrane. Its subcellular location is the dendritic spine. It is found in the sarcolemma. The protein localises to the cell junction. The protein resides in the membrane. It localises to the caveola. The catalysed reaction is K(+)(in) = K(+)(out). Its activity is regulated as follows. Inhibited by 5 mM 4-aminopyridine (4-AP). Not inhibited by dendrotoxins and by tetraethylammonium (TEA). Inhibited by 10 mM flecainide and 20 mM quinidine. Inhibited by the heteropodatoxins HpTx(1), HpTx(2), and HpTx(3). Its function is as follows. Voltage-gated potassium channel that mediates transmembrane potassium transport in excitable membranes, primarily in the brain, but also in rodent heart. Mediates the major part of the dendritic A-type current I(SA) in brain neurons. This current is activated at membrane potentials that are below the threshold for action potentials. It regulates neuronal excitability, prolongs the latency before the first spike in a series of action potentials, regulates the frequency of repetitive action potential firing, shortens the duration of action potentials and regulates the back-propagation of action potentials from the neuronal cell body to the dendrites. Contributes to the regulation of the circadian rhythm of action potential firing in suprachiasmatic nucleus neurons, which regulates the circadian rhythm of locomotor activity. Functions downstream of the metabotropic glutamate receptor GRM5 and plays a role in neuronal excitability and in nociception mediated by activation of GRM5. Mediates the transient outward current I(to) in rodent heart left ventricle apex cells, but not in human heart, where this current is mediated by another family member. Forms tetrameric potassium-selective channels through which potassium ions pass in accordance with their electrochemical gradient. The channel alternates between opened and closed conformations in response to the voltage difference across the membrane. Can form functional homotetrameric channels and heterotetrameric channels that contain variable proportions of KCND2 and KCND3; channel properties depend on the type of pore-forming alpha subunits that are part of the channel. In vivo, membranes probably contain a mixture of heteromeric potassium channel complexes. Interaction with specific isoforms of the regulatory subunits KCNIP1, KCNIP2, KCNIP3 or KCNIP4 strongly increases expression at the cell surface and thereby increases channel activity; it modulates the kinetics of channel activation and inactivation, shifts the threshold for channel activation to more negative voltage values, shifts the threshold for inactivation to less negative voltages and accelerates recovery after inactivation. Likewise, interaction with DPP6 or DPP10 promotes expression at the cell membrane and regulates both channel characteristics and activity. Upon depolarization, the channel goes from a resting closed state (C state) to an activated but non-conducting state (C* state), from there, the channel may either inactivate (I state) or open (O state). The polypeptide is A-type voltage-gated potassium channel KCND2 (Rattus norvegicus (Rat)).